The primary structure comprises 542 residues: Protein lin-9 homolog (542 aa).

Ala-2 bears the N-acetylalanine mark. Residues 2–296 (AELDQLPDES…QKQRPSRFFM (295 aa)) form a sufficient for interaction with RB1 region. Lys-21 participates in a covalent cross-link: Glycyl lysine isopeptide (Lys-Gly) (interchain with G-Cter in SUMO2). Ser-65 and Ser-95 each carry phosphoserine. A phosphothreonine mark is found at Thr-96 and Thr-304. Phosphoserine occurs at positions 309 and 321. Positions 354 to 413 (MIKKEHIKKLREMNTEAEKLKSYSMPISIEFQRRYATIVLELEQLNKDLNKVLHKVQQYC) form a coiled coil.

It belongs to the lin-9 family. Component of the DREAM complex (also named LINC complex) at least composed of E2F4, E2F5, LIN9, LIN37, LIN52, LIN54, MYBL1, MYBL2, RBL1, RBL2, RBBP4, TFDP1 and TFDP2. The complex exists in quiescent cells where it represses cell cycle-dependent genes. It dissociates in S phase when LIN9, LIN37, LIN52 and LIN54 form a subcomplex that binds to MYBL2. Interacts with RB1. Expressed in thymus and testis.

The protein localises to the nucleus. It localises to the nucleoplasm. In terms of biological role, acts as a tumor suppressor. Inhibits DNA synthesis. Its ability to inhibit oncogenic transformation is mediated through its association with RB1. Plays a role in the expression of genes required for the G1/S transition. In Homo sapiens (Human), this protein is Protein lin-9 homolog (LIN9).